A 102-amino-acid chain; its full sequence is Transcription factor UPBEAT1 (102 aa).

The region spanning 32–82 is the bHLH domain; it reads IRPRKSVEASRRPCRAIHRRVKTLKELVPNTKTSEGLDGLFRQTADYILAL.

In terms of assembly, homodimer. As to expression, expressed in the root vascular tissue and in root hairs and lateral root caps. Detected at the protein level in all cell files in the elongation zone.

It localises to the nucleus. Functionally, transcription factor that modulates the balance between cellular proliferation and differentiation in root growth. Does not act through cytokinin and auxin signaling, but by repressing peroxidase expression in the elongation zone. The protein is Transcription factor UPBEAT1 (UPB1) of Arabidopsis thaliana (Mouse-ear cress).